The following is a 336-amino-acid chain: D-altritol 5-dehydrogenase (336 aa).

Zn(2+) is bound by residues cysteine 37, histidine 59, glutamate 60, cysteine 89, cysteine 92, cysteine 95, and cysteine 103.

The protein belongs to the zinc-containing alcohol dehydrogenase family. The cofactor is Zn(2+).

It carries out the reaction D-altritol + NAD(+) = keto-D-tagatose + NADH + H(+). The protein operates within carbohydrate metabolism. Functionally, involved in D-altritol catabolism. Catalyzes the oxidation of D-altritol to D-tagatose. The chain is D-altritol 5-dehydrogenase from Agrobacterium fabrum (strain C58 / ATCC 33970) (Agrobacterium tumefaciens (strain C58)).